The chain runs to 747 residues: Plakophilin-1 (747 aa).

Residues 1–234 (MNHSPLKTAL…SFGHSRASSK (234 aa)) form a required for binding to single stranded DNA region. The interval 1–286 (MNHSPLKTAL…ESAKQQVYQL (286 aa)) is required for interaction with EIF4A1. Ser4 carries the phosphoserine modification. Positions 48–68 (TVKRQKSKSSQSSTLSHSNRG) are disordered. Phosphorylation in this region is required for cytoplasmic localization and protein stabilization regions lie at residues 54-69 (SKSSQSSTLSHSNRGS) and 116-191 (RFSS…STCS). At Ser118 the chain carries Phosphoserine; by PKB/AKT2. 3 positions are modified to phosphoserine: Ser119, Ser121, and Ser142. Residues 160–269 (YCDPRGTLRK…KYQAIGAYYI (110 aa)) form a required for WNT-mediated nuclear localization region. ARM repeat units lie at residues 243–274 (SGLTIPKAVQYLSSQDEKYQAIGAYYIQHTCF), 275–316 (QDES…NLVF), 317–359 (RSTT…NLSS), 360–415 (TDEL…KRLG), 416–463 (MREL…NCVA), 525–556 (NYDCPLPEEETNPKGSGWLYHSDAIRTYLNLM), 557–603 (GKSK…IARL), 604–649 (LQSG…SHTG), and 650–713 (NTSN…DMWS).

This sequence belongs to the beta-catenin family. In terms of assembly, part of a complex that contains DSG3, PKP1, YAP1 and YWHAG; the complex is required for localization of DSG3 and YAP1 to the cell membrane in keratinocytes. Interacts with DSP. Interacts (via N-terminus) with KRT5/CK5, KRT8/CK8 (via rod domain), KRT15/CK15 and KRT18/CK18 (via rod domain) as part of intermediate filaments. Interacts with VIM (via rod domain). Interacts with DSP. Interacts with DES. Interacts with FXR1; the interaction may facilitate the binding of PKP1 to PKP2, PKP3 and DSP mRNA. Interacts (via N-terminus) with EIF4A1; the interaction promotes EIF4A1 recruitment to the cap-dependent translation complex and EIF4A1 ATPase activity. Interacts with TJP1/ZO-1; the interaction facilitates TJP1/ZO-1 localization to the plasma membrane. Interacts (when phosphorylated) with YWHAG; the interaction results in translocation of PKP1 to the cytoplasm and loss of intercellular adhesion in keratinocytes. In terms of processing, phosphorylated by AKT2; required for interaction with YWHAG and subsequent localization away from desmosomes to the cytoplasm. Phosphorylation of Ser-118 by AKT2 promotes PKP1-driven cap-dependent mRNA translation and decreases intercellular adhesion, phosphorylation is promoted by insulin. Phosphorylation by RIPK4 at the N-terminus is required for its role in differentiation of keratinocytes and DSG1 localization at cell junctions. In terms of tissue distribution, expressed in stratified squamous, complex, glandular duct and bladder epithelia (at protein level). Widely expressed (at protein level).

The protein localises to the cell junction. Its subcellular location is the desmosome. The protein resides in the nucleus. It localises to the cytoplasm. It is found in the perinuclear region. The protein localises to the cell membrane. Its subcellular location is the stress granule. In terms of biological role, a component of desmosome cell-cell junctions which are required for positive regulation of cellular adhesion. Plays a role in desmosome protein expression regulation and localization to the desmosomal plaque, thereby maintaining cell sheet integrity and anchorage of desmosomes to intermediate filaments. Required for localization of DSG3 and YAP1 to the cell membrane in keratinocytes in response to mechanical strain, via the formation of an interaction complex composed of DSG3, YAP1, PKP1 and YWHAG. Positively regulates differentiation of keratinocytes, potentially via promoting localization of DSG1 at desmosome cell junctions. Required for calcium-independent development and maturation of desmosome plaques specifically at lateral cell-cell contacts in differentiating keratinocytes. Plays a role in the maintenance of DSG3 protein abundance, DSG3 clustering and localization of these clusters to the cell membrane in keratinocytes. May also promote keratinocyte proliferation and morphogenesis during postnatal development. Required for tight junction inside-out transepidermal barrier function of the skin. Promotes Wnt-mediated proliferation and differentiation of ameloblasts, via facilitating TJP1/ZO-1 localization to tight junctions. Binds single-stranded DNA (ssDNA), and may thereby play a role in sensing DNA damage and promoting cell survival. Positively regulates cap-dependent translation and as a result cell proliferation, via recruitment of EIF4A1 to the initiation complex and promotion of EIF4A1 ATPase activity. Regulates the mRNA stability and protein abundance of desmosome components PKP2, PKP3, DSC2 and DSP, potentially via its interaction with FXR1. This is Plakophilin-1 (PKP1) from Homo sapiens (Human).